A 64-amino-acid chain; its full sequence is UPF0434 protein Bcep18194_A5877 (64 aa).

Belongs to the UPF0434 family.

The polypeptide is UPF0434 protein Bcep18194_A5877 (Burkholderia lata (strain ATCC 17760 / DSM 23089 / LMG 22485 / NCIMB 9086 / R18194 / 383)).